A 214-amino-acid polypeptide reads, in one-letter code: tRNA (guanine-N(7)-)-methyltransferase (214 aa).

The S-adenosyl-L-methionine site is built by aspartate 35, glutamate 60, asparagine 87, and aspartate 113. Aspartate 113 is an active-site residue. 2 residues coordinate substrate: lysine 117 and aspartate 149.

The protein belongs to the class I-like SAM-binding methyltransferase superfamily. TrmB family.

The enzyme catalyses guanosine(46) in tRNA + S-adenosyl-L-methionine = N(7)-methylguanosine(46) in tRNA + S-adenosyl-L-homocysteine. It participates in tRNA modification; N(7)-methylguanine-tRNA biosynthesis. In terms of biological role, catalyzes the formation of N(7)-methylguanine at position 46 (m7G46) in tRNA. The protein is tRNA (guanine-N(7)-)-methyltransferase of Prochlorococcus marinus (strain NATL1A).